The following is a 1134-amino-acid chain: Envelopment polyprotein (1134 aa).

The first 18 residues, 1–18 (MGIWKWLVMASLVWPVLT), serve as a signal peptide directing secretion. Residues 19-487 (LRNVYDMKIE…GFHGWATAAL (469 aa)) lie on the Lumenal side of the membrane. 8 cysteine pairs are disulfide-bonded: C29/C151, C63/C157, C109/C128, C133/C138, C175/C185, C210/C247, C234/C351, and C380/C389. A glycan (N-linked (GlcNAc...) asparagine; by host) is linked at N134. Residues N235 and N347 are each glycosylated (N-linked (GlcNAc...) asparagine; by host). N399 carries N-linked (GlcNAc...) asparagine; by host glycosylation. 2 disulfides stabilise this stretch: C405-C424 and C452-C475. A helical membrane pass occupies residues 488–508 (LVTFCFGWVLIPAVTFIILAI). At 509-627 (LKFIANIFHT…LNLFRYKSRC (119 aa)) the chain is on the cytoplasmic side. Residues 516–533 (FHTSNQENRLKSVLRKIK) form a binding to the ribonucleoprotein region. 2 consecutive CCHC-type zinc fingers follow at residues 545–565 (CDVC…GVSC) and 570–591 (CPYC…YKVC). 3 binding to the ribonucleoprotein regions span residues 588–605 (YKVC…KKTV), 592–603 (QVTHRFRDDLKK), and 611–625 (TPGC…RYKS). The 24-residue stretch at 611–634 (TPGCYRTLNLFRYKSRCYIFTMWI) folds into the ITAM domain. The short motif at 615 to 618 (YRTL) is the YxxL element. A helical membrane pass occupies residues 628–648 (YIFTMWIFLLVLESILWAASA). Topologically, residues 649–1104 (SETPLTPVWN…EWISGIFSGN (456 aa)) are lumenal. 7 cysteine pairs are disulfide-bonded: C734–C769, C738–C776, C750–C884, C764–C895, C779–C903, C805–C814, and C822–C831. The segment at 756-776 (YQYETSWGCNPSDCPGCGTGC) is fusion loop. Residue N927 is glycosylated (N-linked (GlcNAc...) asparagine; by host). Cystine bridges form between C969/C999, C992/C1044, C1009/C1014, C1045/C1050, and C1084/C1088. The helical transmembrane segment at 1105-1125 (WIVLIVLCVFLLFSLVLLSIL) threads the bilayer. The binding to the ribonucleoprotein stretch occupies residues 1121-1134 (LLSILCPVRKHKKS). Over 1126–1134 (CPVRKHKKS) the chain is Cytoplasmic.

This sequence belongs to the hantavirus envelope glycoprotein family. As to quaternary structure, homodimer. Homotetramer; forms heterotetrameric Gn-Gc spikes in the pre-fusion conformation. Interacts (via C-terminus) with the nucleoprotein. Interacts with host TUFM; this interaction contributes to the virus-induced degradation of mitochondria by autophagy, which leads to degradation of host MAVS and inhibition of type I interferon (IFN) responses. Interacts with host MAP1LC3B; this interaction contributes to the virus-induced degradation of mitochondria by autophagy, which leads to degradation of host MAVS and inhibition of type I interferon (IFN) responses. In terms of assembly, homodimer. Homotetramer; forms heterotetrameric Gn-Gc spikes in the pre-fusion conformation. Homotrimer; forms homotrimer in the post-fusion conformation at acidic pH. Interacts (via C-terminus) with the nucleoprotein. In terms of processing, envelope polyprotein precursor is quickly cleaved in vivo just after synthesis, presumably by host signal peptidase.

It localises to the virion membrane. The protein localises to the host cell surface. Its subcellular location is the host Golgi apparatus membrane. It is found in the host endoplasmic reticulum membrane. The protein resides in the host mitochondrion. Its function is as follows. Forms homotetramers with glycoprotein C at the surface of the virion. Attaches the virion to host cell receptors including integrin ITGAV/ITGB3. This attachment induces virion internalization predominantly through clathrin-dependent endocytosis. May also bind to host C1QBP for virus entry into the host cell. Mediates the assembly and budding of infectious virus particles through its interaction with the nucleocapsid protein and the viral genome. May dysregulate normal immune and endothelial cell responses through an ITAM motif. Translocates to mitochondria, binds to host TUFM and recruits MAP1LC3B. These interactions induce mitochondrial autophagy and therefore destruction of host MAVS leading to inhibition of type I interferon (IFN) responses. Concomitant breakdown of glycoprotein N is apparently prevented by the nucleoprotein that may inhibit Gn-stimulated autophagosome-lysosome fusion. Interacts with the viral genomic RNA. Functionally, forms homotetramers with glycoprotein N at the surface of the virion. Attaches the virion to host cell receptors including integrin ITGAV/ITGB3. This attachment induces virion internalization predominantly through clathrin-dependent endocytosis. May also bind to host C1QBP for virus entry into the host cell. Class II fusion protein that promotes fusion of viral membrane with host endosomal membrane after endocytosis of the virion. This is Envelopment polyprotein (GP) from Apodemus agrarius (Eurasian field mouse).